The primary structure comprises 359 residues: Type-1 angiotensin II receptor (359 aa).

Residues 1 to 25 (MILNSSTEDGIKRIQDDCPKAGRHN) lie on the Extracellular side of the membrane. N-linked (GlcNAc...) asparagine glycosylation occurs at Asn-4. Gln-15 and Asp-17 together coordinate angiotensin II. 2 disulfide bridges follow: Cys-18/Cys-274 and Cys-101/Cys-180. The chain crosses the membrane as a helical span at residues 26-55 (YIFVMIPTLYSIIFVVGIFGNSLVVIVIYF). The Cytoplasmic segment spans residues 56 to 61 (YMKLKT). Residues 62 to 89 (VASVFLLNLALADLCFLLTLPLWAVYTA) traverse the membrane as a helical segment. The Extracellular portion of the chain corresponds to 90-98 (MEYRWPFGN). Residues 99 to 125 (YLCKIASASVSFNLYASVFLLTCLSID) traverse the membrane as a helical segment. The Cytoplasmic portion of the chain corresponds to 126 to 141 (RYLAIVHPMKSRLRRT). The chain crosses the membrane as a helical span at residues 142 to 165 (MLVAKVTCIIIWLLAGLASLPAII). Residues 166-190 (HRNVFFIENTNITVCAFHYESQNST) are Extracellular-facing. Residue Arg-167 participates in angiotensin II binding. The N-linked (GlcNAc...) asparagine glycan is linked to Asn-176. Residues Phe-182, His-183, and Tyr-184 each contribute to the angiotensin II site. An N-linked (GlcNAc...) asparagine glycan is attached at Asn-188. The helical transmembrane segment at 191–216 (LPIGLGLTKNILGFLFPFLIILTSYT) threads the bilayer. An angiotensin II-binding site is contributed by Lys-199. At 217-239 (LIWKALKKAYEIQKNKPRNDDIF) the chain is on the cytoplasmic side. The helical transmembrane segment at 240–268 (KIIMAIVLFFFFSWIPHQIFTFLDVLIQL) threads the bilayer. Residues 269-278 (GIIRDCRIAD) lie on the Extracellular side of the membrane. A helical membrane pass occupies residues 279–304 (IVDTAMPITICIAYFNNCLNPLFYGF). Topologically, residues 305–359 (LGKKFKKYFLQLLKYIPPKAKSHSNLSTKMSTLSYRPSDNVSSSTKKPAPCFEVE) are cytoplasmic. The span at 335–350 (STLSYRPSDNVSSSTK) shows a compositional bias: polar residues. The tract at residues 335–359 (STLSYRPSDNVSSSTKKPAPCFEVE) is disordered. Residue Cys-355 is the site of S-palmitoyl cysteine attachment.

The protein belongs to the G-protein coupled receptor 1 family. In terms of assembly, interacts with MAS1. Interacts with ARRB1. Interacts with FLNA (via filamin repeat 21); increases PKA-mediated phosphorylation of FLNA. In terms of processing, C-terminal Ser or Thr residues may be phosphorylated.

It localises to the cell membrane. Functionally, receptor for angiotensin II, a vasoconstricting peptide, which acts as a key regulator of blood pressure and sodium retention by the kidney. The activated receptor in turn couples to G-alpha proteins G(q) (GNAQ, GNA11, GNA14 or GNA15) and thus activates phospholipase C and increases the cytosolic Ca(2+) concentrations, which in turn triggers cellular responses such as stimulation of protein kinase C. This chain is Type-1 angiotensin II receptor (AGTR1), found in Pan troglodytes (Chimpanzee).